The sequence spans 175 residues: uncharacterized protein (175 aa).

It is found in the cytoplasm. Its subcellular location is the nucleus. This is an uncharacterized protein from Schizosaccharomyces pombe (strain 972 / ATCC 24843) (Fission yeast).